The sequence spans 354 residues: Ferrochelatase (354 aa).

2 residues coordinate Fe cation: H204 and E306.

This sequence belongs to the ferrochelatase family.

It is found in the cytoplasm. It catalyses the reaction heme b + 2 H(+) = protoporphyrin IX + Fe(2+). The protein operates within porphyrin-containing compound metabolism; protoheme biosynthesis; protoheme from protoporphyrin-IX: step 1/1. In terms of biological role, catalyzes the ferrous insertion into protoporphyrin IX. The protein is Ferrochelatase of Coxiella burnetii (strain CbuK_Q154) (Coxiella burnetii (strain Q154)).